The sequence spans 573 residues: Ribosomal RNA-processing protein 9 (573 aa).

Residues 1–63 (MSDVTQQKKR…FEGENPADKR (63 aa)) form a disordered region. The residue at position 2 (Ser-2) is an N-acetylserine. The span at 25 to 58 (DEEITDPSSNEDEQLEVSDEEDALESEEEFEGEN) shows a compositional bias: acidic residues. The stretch at 32-106 (SSNEDEQLEV…KERTIDEYNN (75 aa)) forms a coiled coil. At Ser-50 the chain carries Phosphoserine. WD repeat units follow at residues 234 to 273 (GHYD…PVKV), 278 to 317 (DRRG…QLEI), 320 to 359 (GHHD…RLTF), 397 to 435 (FCEG…PIFT), 471 to 509 (QPFW…RSFE), and 516 to 562 (GAKG…ARNG).

Belongs to the WD repeat RRP9 family. Interacts with UTP25. Component of the ribosomal small subunit (SSU) processome composed of at least 40 protein subunits and snoRNA U3.

The protein resides in the nucleus. Its subcellular location is the nucleolus. Involved in nucleolar processing of pre-18S ribosomal RNA. Required for efficient pre-rRNA cleavage at sites A0, A1 and A2, and biosynthesis of 18S rRNA. The polypeptide is Ribosomal RNA-processing protein 9 (RRP9) (Saccharomyces cerevisiae (strain ATCC 204508 / S288c) (Baker's yeast)).